A 602-amino-acid chain; its full sequence is Wings apart-like protein homolog 1 (602 aa).

The segment at Asn-34 to Pro-66 is disordered. Over residues Val-54–Pro-66 the composition is skewed to polar residues. One can recognise a WAPL domain in the interval Ile-160–Phe-492.

Belongs to the WAPL family.

It localises to the nucleus. The protein localises to the chromosome. Functionally, regulator of sister chromatid cohesion in mitosis which negatively regulates cohesin association with chromatin. The sequence is that of Wings apart-like protein homolog 1 (wpl1) from Schizosaccharomyces pombe (strain 972 / ATCC 24843) (Fission yeast).